The primary structure comprises 85 residues: UPF0298 protein SUB0431 (85 aa).

This sequence belongs to the UPF0298 family.

It is found in the cytoplasm. The protein is UPF0298 protein SUB0431 of Streptococcus uberis (strain ATCC BAA-854 / 0140J).